The following is a 430-amino-acid chain: Sorting nexin-4 (430 aa).

Positions 1-18 are enriched in polar residues; that stretch reads MDSASADASVTGSGNAKG. Residues 1–22 are disordered; sequence MDSASADASVTGSGNAKGSSAE. One can recognise a PX domain in the interval 33–162; that stretch reads LEILVSDPQK…IFLVGNEWDT (130 aa). Positions 83, 109, and 128 each coordinate a 1,2-diacyl-sn-glycero-3-phospho-(1D-myo-inositol-3-phosphate). Residues 351–414 adopt a coiled-coil conformation; that stretch reads ASRRDKINKL…NNLADENIKF (64 aa).

Belongs to the sorting nexin family.

Its subcellular location is the cytoplasm. It is found in the cytosol. The protein resides in the preautophagosomal structure membrane. The protein localises to the endosome membrane. Its function is as follows. Sorting nexin, involved in the separation or division of vacuoles throughout the entire life cycle of the cells. Involved in retrieval of late-Golgi SNAREs from post-Golgi endosomes to the trans-Golgi network, for cytoplasm to vacuole transport (Cvt), and autophagy of large cargos including mitophagy, pexophagy and glycophagy. This Candida glabrata (strain ATCC 2001 / BCRC 20586 / JCM 3761 / NBRC 0622 / NRRL Y-65 / CBS 138) (Yeast) protein is Sorting nexin-4 (SNX4).